The sequence spans 351 residues: GMP reductase (351 aa).

108–131 (EDFVKLKQILSLSSKLKYICIDVA) provides a ligand contact to NADP(+). Gly-181 and Gly-183 together coordinate K(+). Cys-186 serves as the catalytic Thioimidate intermediate. 216–239 (IISDGGCVVSGDIAKAFGGGADFV) is an NADP(+) binding site.

This sequence belongs to the IMPDH/GMPR family. GuaC type 1 subfamily. Homotetramer.

It carries out the reaction IMP + NH4(+) + NADP(+) = GMP + NADPH + 2 H(+). Functionally, catalyzes the irreversible NADPH-dependent deamination of GMP to IMP. It functions in the conversion of nucleobase, nucleoside and nucleotide derivatives of G to A nucleotides, and in maintaining the intracellular balance of A and G nucleotides. This is GMP reductase (guaC) from Buchnera aphidicola subsp. Baizongia pistaciae (strain Bp).